Consider the following 459-residue polypeptide: NADP-specific glutamate dehydrogenase (459 aa).

Lysine 116 is a catalytic residue.

It belongs to the Glu/Leu/Phe/Val dehydrogenases family. As to quaternary structure, homohexamer.

It catalyses the reaction L-glutamate + NADP(+) + H2O = 2-oxoglutarate + NH4(+) + NADPH + H(+). This chain is NADP-specific glutamate dehydrogenase (GDHA), found in Schwanniomyces occidentalis (Yeast).